Consider the following 265-residue polypeptide: 5'-nucleotidase SurE (265 aa).

Asp-9, Asp-10, Ser-40, and Asn-96 together coordinate a divalent metal cation.

Belongs to the SurE nucleotidase family. A divalent metal cation serves as cofactor.

It is found in the cytoplasm. It carries out the reaction a ribonucleoside 5'-phosphate + H2O = a ribonucleoside + phosphate. Its function is as follows. Nucleotidase that shows phosphatase activity on nucleoside 5'-monophosphates. This Methanothrix thermoacetophila (strain DSM 6194 / JCM 14653 / NBRC 101360 / PT) (Methanosaeta thermophila) protein is 5'-nucleotidase SurE.